The following is a 215-amino-acid chain: Redox-sensing transcriptional repressor Rex (215 aa).

Residues 18–57 constitute a DNA-binding region (H-T-H motif); it reads LYYRFLKNLHASGKQRVSSAELSDAVKVDSATIRRDFSYF. 92 to 97 lines the NAD(+) pocket; it reads GVGNLG.

This sequence belongs to the transcriptional regulatory Rex family. As to quaternary structure, homodimer.

It localises to the cytoplasm. Functionally, modulates transcription in response to changes in cellular NADH/NAD(+) redox state. The chain is Redox-sensing transcriptional repressor Rex from Bacillus subtilis (strain 168).